The following is a 340-amino-acid chain: Porphobilinogen deaminase (340 aa).

C258 bears the S-(dipyrrolylmethanemethyl)cysteine mark.

Belongs to the HMBS family. Dipyrromethane serves as cofactor.

It catalyses the reaction 4 porphobilinogen + H2O = hydroxymethylbilane + 4 NH4(+). It participates in porphyrin-containing compound metabolism; protoporphyrin-IX biosynthesis; coproporphyrinogen-III from 5-aminolevulinate: step 2/4. In terms of biological role, tetrapolymerization of the monopyrrole PBG into the hydroxymethylbilane pre-uroporphyrinogen in several discrete steps. This Candida albicans (strain SC5314 / ATCC MYA-2876) (Yeast) protein is Porphobilinogen deaminase (HEM3).